The sequence spans 350 residues: Methionine import ATP-binding protein MetN (350 aa).

Residues 2-241 (IQIKNLKKEY…PQAPVTRSFV (240 aa)) form the ABC transporter domain. 38–45 (GHSGAGKS) provides a ligand contact to ATP.

The protein belongs to the ABC transporter superfamily. Methionine importer (TC 3.A.1.24) family. As to quaternary structure, the complex is composed of two ATP-binding proteins (MetN), two transmembrane proteins (MetI) and a solute-binding protein (MetQ).

It is found in the cell inner membrane. It carries out the reaction L-methionine(out) + ATP + H2O = L-methionine(in) + ADP + phosphate + H(+). The catalysed reaction is D-methionine(out) + ATP + H2O = D-methionine(in) + ADP + phosphate + H(+). In terms of biological role, part of the ABC transporter complex MetNIQ involved in methionine import. Responsible for energy coupling to the transport system. This Francisella tularensis subsp. tularensis (strain SCHU S4 / Schu 4) protein is Methionine import ATP-binding protein MetN.